Here is a 101-residue protein sequence, read N- to C-terminus: DNA-binding protein Fis (101 aa).

The H-T-H motif DNA-binding region spans 77 to 96 (QTRAANMLGINRGTLRKKLK).

This sequence belongs to the transcriptional regulatory Fis family. As to quaternary structure, homodimer.

Its function is as follows. Activates ribosomal RNA transcription. Plays a direct role in upstream activation of rRNA promoters. The chain is DNA-binding protein Fis from Shewanella amazonensis (strain ATCC BAA-1098 / SB2B).